A 331-amino-acid chain; its full sequence is Mucin-15 (331 aa).

Residues 1 to 22 form the signal peptide; sequence MLTLAKIALISSLFISLPFARP. The Extracellular portion of the chain corresponds to 23–233; that stretch reads QKQNPRRNVT…SDTPKENKNT (211 aa). N30, N44, N54, N59, N75, N84, N120, N136, N145, N152, N215, and N222 each carry an N-linked (GlcNAc...) asparagine glycan. A compositionally biased stretch (polar residues) spans 124 to 162; sequence ADANPLQVSEHSNSTNSPSPENFTWSLDNDTMNSPEDIS. Residues 124–186 form a disordered region; that stretch reads ADANPLQVSE…VTPFTAEPTE (63 aa). Residues 234 to 254 traverse the membrane as a helical segment; it reads GIVFGAILGAILGASLLSLVG. Residues 255–331 are Cytoplasmic-facing; that stretch reads YLLCGQRKTD…DAIPPLRPSI (77 aa). The tract at residues 302–331 is disordered; it reads AVSDSSMPEGGESLQDGIPMDAIPPLRPSI.

In terms of processing, highly glycosylated (N- and O-linked carbohydrates).

Its subcellular location is the membrane. The chain is Mucin-15 (Muc15) from Mus musculus (Mouse).